A 656-amino-acid polypeptide reads, in one-letter code: Chromosomal replication initiator protein DnaA (656 aa).

The interval 1–100 (MADVPADLAA…TAGEPAGPAP (100 aa)) is domain I, interacts with DnaA modulators. Residues 91-313 (TAGEPAGPAP…PAPATGPGEP (223 aa)) form a disordered region. A compositionally biased stretch (pro residues) spans 97-109 (GPAPQAPQSPPSR). Residues 101–315 (QAPQSPPSRP…PATGPGEPTA (215 aa)) are domain II. Basic and acidic residues-rich tracts occupy residues 126–144 (GREE…RNRA) and 231–273 (QRGD…RDLP). Residues 291 to 313 (GPATGAPGPLAAQPAPATGPGEP) are compositionally biased toward low complexity. The interval 316–532 (RLNPKYLFDT…GALIRVTAFA (217 aa)) is domain III, AAA+ region. ATP is bound by residues Gly-360, Gly-362, Lys-363, and Thr-364. Residues 533 to 656 (SLNRQPVDLG…TELTNRIKNG (124 aa)) form a domain IV, binds dsDNA region.

It belongs to the DnaA family. Oligomerizes as a right-handed, spiral filament on DNA at oriC.

Its subcellular location is the cytoplasm. Plays an essential role in the initiation and regulation of chromosomal replication. ATP-DnaA binds to the origin of replication (oriC) to initiate formation of the DNA replication initiation complex once per cell cycle. Binds the DnaA box (a 9 base pair repeat at the origin) and separates the double-stranded (ds)DNA. Forms a right-handed helical filament on oriC DNA; dsDNA binds to the exterior of the filament while single-stranded (ss)DNA is stabiized in the filament's interior. The ATP-DnaA-oriC complex binds and stabilizes one strand of the AT-rich DNA unwinding element (DUE), permitting loading of DNA polymerase. After initiation quickly degrades to an ADP-DnaA complex that is not apt for DNA replication. Binds acidic phospholipids. The sequence is that of Chromosomal replication initiator protein DnaA from Streptomyces coelicolor (strain ATCC BAA-471 / A3(2) / M145).